The sequence spans 373 residues: Mating-type protein A-2 (373 aa).

The interval 1 to 22 is disordered; that stretch reads MNLLNMQPKRSEQPAMFEENRA.

To P.anserina SMR1.

Functionally, required, together with mating-type protein A-3, for efficient ascospore formation. The protein is Mating-type protein A-2 (matA-2) of Neurospora crassa (strain ATCC 24698 / 74-OR23-1A / CBS 708.71 / DSM 1257 / FGSC 987).